The following is a 104-amino-acid chain: Probable quinol monooxygenase YgiN (104 aa).

The region spanning 2–100 is the ABM domain; sequence LTVIAEIRTR…DVLEMNIRIL (99 aa).

Homodimer.

It catalyses the reaction menadiol + 2 O2 = menadione + 2 superoxide + 2 H(+). In terms of biological role, can oxidize menadiol to menadione. The protein is Probable quinol monooxygenase YgiN (ygiN) of Escherichia coli O157:H7.